The primary structure comprises 564 residues: Adenine deaminase (564 aa).

This sequence belongs to the metallo-dependent hydrolases superfamily. Adenine deaminase family. Requires Mn(2+) as cofactor.

It catalyses the reaction adenine + H2O + H(+) = hypoxanthine + NH4(+). This is Adenine deaminase from Deinococcus geothermalis (strain DSM 11300 / CIP 105573 / AG-3a).